A 137-amino-acid chain; its full sequence is Putative pre-16S rRNA nuclease (137 aa).

Belongs to the YqgF nuclease family.

It localises to the cytoplasm. Its function is as follows. Could be a nuclease involved in processing of the 5'-end of pre-16S rRNA. This chain is Putative pre-16S rRNA nuclease, found in Clostridium botulinum (strain Alaska E43 / Type E3).